The chain runs to 848 residues: Leucine--tRNA ligase (848 aa).

Over residues 1–16 (MCPEQPHDTRAERDEM) the composition is skewed to basic and acidic residues. A disordered region spans residues 1 to 30 (MCPEQPHDTRAERDEMSEQTQQAAQPAETA). Residues 18–30 (EQTQQAAQPAETA) show a composition bias toward low complexity. A 'HIGH' region motif is present at residues 69 to 79 (PYPSGDLHMGH). Residues 614–618 (KMSKS) carry the 'KMSKS' region motif. Position 617 (lysine 617) interacts with ATP.

The protein belongs to the class-I aminoacyl-tRNA synthetase family.

The protein resides in the cytoplasm. It carries out the reaction tRNA(Leu) + L-leucine + ATP = L-leucyl-tRNA(Leu) + AMP + diphosphate. The protein is Leucine--tRNA ligase of Nocardioides sp. (strain ATCC BAA-499 / JS614).